A 670-amino-acid chain; its full sequence is Solute carrier organic anion transporter family member 1A5 (670 aa).

The Cytoplasmic segment spans residues 1-20 (MGETEKRIATHGVRCFSKIK). The helical transmembrane segment at 21–40 (MFLLALTCAYVSKSLSGIYM) threads the bilayer. Residues 41–59 (NSMLTQIERQFDIPTSIVG) lie on the Extracellular side of the membrane. A helical membrane pass occupies residues 60-80 (LINGSFEIGNLLLIILVSYFG). Residues 81–86 (TKLHRP) are Cytoplasmic-facing. A helical transmembrane segment spans residues 87 to 111 (IMIGIGCVIMGLGCFLMSLPHFLMG). Topologically, residues 112-155 (RYEYETTISPTSNLSSNSFLCMENRTQTLKPTQDPAECVKEMKS) are extracellular. N124 and N135 each carry an N-linked (GlcNAc...) asparagine glycan. Residues 156–184 (LMWIYVLVGNIIRGIGETPIMPLGISYIE) traverse the membrane as a helical segment. Residues 185-203 (DFAKSENSPLYIGILESGK) lie on the Cytoplasmic side of the membrane. The chain crosses the membrane as a helical span at residues 204-224 (MIGPIVGLLLGSFCARIYVDT). Over 225–242 (GSVNTDDLTITPTDTRWV) the chain is Extracellular. Residues 243–267 (GAWWIGFLVCAGVNILTSIPFFFFP) form a helical membrane-spanning segment. Topologically, residues 268 to 311 (KTLPKEGLQDNVARTENDKEEKHREKAKEENRGITKDFLPFMKS) are cytoplasmic. A helical membrane pass occupies residues 312-333 (LSCNPIYMLLILTSVLQINAFI). The Extracellular portion of the chain corresponds to 334–353 (NMFTFLPKYLEQQYGKSTSE). A helical membrane pass occupies residues 354–377 (VVLLIGVCNLPPICIGYLLIGFIM). At 378–381 (KKFR) the chain is on the cytoplasmic side. Residues 382-405 (ITVKKAAYMAFCLSLFEYLLSYFH) form a helical membrane-spanning segment. Residues 406–513 (FMISCDNFQV…PECANKLQYF (108 aa)) lie on the Extracellular side of the membrane. A Kazal-like domain is found at 433 to 488 (NKVLADCNTRCSCLTNTWDPVCGDNGLSYMSACLAGCEKSVGMGTHMVFQNCSCIQ). 3 cysteine pairs are disulfide-bonded: C439-C469, C445-C465, and C454-C486. N-linked (GlcNAc...) asparagine glycans are attached at residues N483 and N492. A helical transmembrane segment spans residues 514-536 (LIMSVIGSFIYSITAIPGYMVLL). The Cytoplasmic segment spans residues 537 to 545 (RCIKSEEKS). A helical membrane pass occupies residues 546–571 (LGIGLHAFCTRIFAGIPAPIYFGALI). Residues 572–605 (DRTCLHWGTLKCGEPGACRIYNINNFRRIYLVLP) lie on the Extracellular side of the membrane. A helical membrane pass occupies residues 606-623 (AALRGSSYLPAFFILILM). At 624-670 (RKFQLPGEMYSSETELADMKQTVKKSECTDVHGIPKVENDGELKTKL) the chain is on the cytoplasmic side.

This sequence belongs to the organo anion transporter (TC 2.A.60) family. In terms of tissue distribution, expressed in brain, choroid plexus and lung, but not in liver or kidney.

It is found in the cell membrane. It localises to the basal cell membrane. The enzyme catalyses taurocholate(out) = taurocholate(in). It carries out the reaction glycocholate(out) = glycocholate(in). The catalysed reaction is taurochenodeoxycholate(out) = taurochenodeoxycholate(in). It catalyses the reaction tauroursodeoxycholate(out) = tauroursodeoxycholate(in). The enzyme catalyses 3,3',5'-triiodo-L-thyronine(out) = 3,3',5'-triiodo-L-thyronine(in). It carries out the reaction L-thyroxine(out) = L-thyroxine(in). The catalysed reaction is taurodeoxycholate(out) = taurodeoxycholate(in). It catalyses the reaction glycodeoxycholate(out) = glycodeoxycholate(in). The enzyme catalyses glycochenodeoxycholate(out) = glycochenodeoxycholate(in). It carries out the reaction glycoursodeoxycholate(out) = glycoursodeoxycholate(in). The catalysed reaction is estrone 3-sulfate(out) = estrone 3-sulfate(in). It catalyses the reaction prostaglandin E2(out) = prostaglandin E2(in). The enzyme catalyses substance P(out) = substance P(in). Functionally, na(+)-independent transporter that mediates the cellular uptake of a broad range of organic anions such as the endogenous bile salts cholate and deoxycholate, either in their unconjugated or conjugated forms (taurocholate and glycocholate), estrone 3-sulfate and prostaglandin E2, at the plasma membrane. Responsible for intestinal absorption of bile acids. Capable of thyroid hormone transport (both T3 or 3,3',5'-triiodo-L-thyronine, and T4 or L-tyroxine). Plays roles in blood-brain and -cerebrospinal fluid barrier transport of organic anions and signal mediators, and in hormone uptake by neural cells. May also play a role in the reuptake of neuropeptides such as substance P/TAC1 and vasoactive intestinal peptide/VIP released from retinal neurons. Shows a pH-sensitive substrate specificity which may be ascribed to the protonation state of the binding site and leads to a stimulation of substrate transport in an acidic microenvironment. Hydrogencarbonate/HCO3(-) acts as the probable counteranion that exchanges for organic anions. May contribute to regulate the transport of organic compounds in testis across the blood-testis-barrier. This is Solute carrier organic anion transporter family member 1A5 (Slco1a5) from Mus musculus (Mouse).